A 136-amino-acid polypeptide reads, in one-letter code: DUF35 domain-containing scaffold protein (136 aa).

Positions 25, 38, and 41 each coordinate Zn(2+).

It belongs to the scaffold protein DUF35 family. In terms of assembly, interacts with acetoacetyl-CoA thiolase and HMG-CoA synthase (HMGCS) that catalyzes the first and second step in the mevalonate pathway, respectively.

In terms of biological role, functions as a scaffold to connect the acetoacetyl-CoA thiolase and HMG-CoA synthase (HMGCS) dimers in the channeling thiolase/HMGCS complex, which allows for efficient coupling of the endergonic thiolase reaction with the exergonic HMGCS reaction. The polypeptide is DUF35 domain-containing scaffold protein (Pyrococcus furiosus (strain ATCC 43587 / DSM 3638 / JCM 8422 / Vc1)).